The following is a 183-amino-acid chain: Shikimate kinase (183 aa).

15–20 (GSGKST) contributes to the ATP binding site. S19 is a binding site for Mg(2+). The substrate site is built by D37, R61, and G85. ATP is bound at residue R123. Position 142 (R142) interacts with substrate.

Belongs to the shikimate kinase family. In terms of assembly, monomer. It depends on Mg(2+) as a cofactor.

The protein resides in the cytoplasm. It catalyses the reaction shikimate + ATP = 3-phosphoshikimate + ADP + H(+). The protein operates within metabolic intermediate biosynthesis; chorismate biosynthesis; chorismate from D-erythrose 4-phosphate and phosphoenolpyruvate: step 5/7. Functionally, catalyzes the specific phosphorylation of the 3-hydroxyl group of shikimic acid using ATP as a cosubstrate. The protein is Shikimate kinase of Paracidovorax citrulli (strain AAC00-1) (Acidovorax citrulli).